Here is a 103-residue protein sequence, read N- to C-terminus: Small ribosomal subunit protein uS10 (103 aa).

It belongs to the universal ribosomal protein uS10 family. Part of the 30S ribosomal subunit.

Involved in the binding of tRNA to the ribosomes. This chain is Small ribosomal subunit protein uS10, found in Pseudoalteromonas atlantica (strain T6c / ATCC BAA-1087).